We begin with the raw amino-acid sequence, 79 residues long: D-alanyl carrier protein (79 aa).

Residues 1 to 77 enclose the Carrier domain; the sequence is MDTKQAVLDI…KIIAKVESLR (77 aa). An O-(pantetheine 4'-phosphoryl)serine modification is found at Ser-35.

The protein belongs to the DltC family. In terms of processing, 4'-phosphopantetheine is transferred from CoA to a specific serine of apo-DCP.

It localises to the cytoplasm. Its pathway is cell wall biogenesis; lipoteichoic acid biosynthesis. Carrier protein involved in the D-alanylation of lipoteichoic acid (LTA). The loading of thioester-linked D-alanine onto DltC is catalyzed by D-alanine--D-alanyl carrier protein ligase DltA. The DltC-carried D-alanyl group is further transferred to cell membrane phosphatidylglycerol (PG) by forming an ester bond, probably catalyzed by DltD. D-alanylation of LTA plays an important role in modulating the properties of the cell wall in Gram-positive bacteria, influencing the net charge of the cell wall. The protein is D-alanyl carrier protein of Lactobacillus johnsonii (strain CNCM I-12250 / La1 / NCC 533).